The chain runs to 186 residues: uncharacterized protein (186 aa).

4 helical membrane passes run 5-25 (LIAC…FEDI), 39-59 (IITI…KLFA), 62-82 (NLLF…ILLF), and 122-142 (GFFE…IALM).

It is found in the cell membrane. This is an uncharacterized protein from Borreliella burgdorferi (strain ATCC 35210 / DSM 4680 / CIP 102532 / B31) (Borrelia burgdorferi).